We begin with the raw amino-acid sequence, 351 residues long: Homoserine O-acetyltransferase (351 aa).

In terms of domain architecture, AB hydrolase-1 spans 51–334; the sequence is VIWVLHALTG…IYGHDAFLIE (284 aa). The Nucleophile role is filled by S146. Residue R212 participates in substrate binding. Active-site residues include D299 and H328. D329 lines the substrate pocket.

Belongs to the AB hydrolase superfamily. MetX family. Homodimer.

It localises to the cytoplasm. It carries out the reaction L-homoserine + acetyl-CoA = O-acetyl-L-homoserine + CoA. The protein operates within amino-acid biosynthesis; L-methionine biosynthesis via de novo pathway; O-acetyl-L-homoserine from L-homoserine: step 1/1. In terms of biological role, transfers an acetyl group from acetyl-CoA to L-homoserine, forming acetyl-L-homoserine. The chain is Homoserine O-acetyltransferase from Cyclobacterium marinum (strain ATCC 25205 / DSM 745 / LMG 13164 / NCIMB 1802) (Flectobacillus marinus).